The sequence spans 166 residues: Transcription antitermination protein NusB (166 aa).

Belongs to the NusB family.

Functionally, involved in transcription antitermination. Required for transcription of ribosomal RNA (rRNA) genes. Binds specifically to the boxA antiterminator sequence of the ribosomal RNA (rrn) operons. The sequence is that of Transcription antitermination protein NusB from Chromohalobacter salexigens (strain ATCC BAA-138 / DSM 3043 / CIP 106854 / NCIMB 13768 / 1H11).